Reading from the N-terminus, the 315-residue chain is Alpha- and gamma-adaptin-binding protein p34 (315 aa).

The disordered stretch occupies residues 197-234 (IGSADPCHPEQPHLPAADSTESLSDHRGGASNTTDAQV). Phosphoserine occurs at positions 310 and 311.

In terms of assembly, associated with AP-1 and AP-2 complexes. As to expression, widely expressed, including in skin and keratinocytes, with highest levels in adrenal gland, rectum and thymus.

The protein localises to the cytoplasm. The protein resides in the cytosol. In terms of biological role, may be involved in endocytic recycling of growth factor receptors such as EGFR. The chain is Alpha- and gamma-adaptin-binding protein p34 (AAGAB) from Homo sapiens (Human).